The primary structure comprises 145 residues: Cell wall teichoic acid glycosylation protein GtcA (145 aa).

4 helical membrane passes run 21-41, 45-65, 91-111, and 122-142; these read IFMY…TFWL, ILNW…VLFA, FFGF…LLIS, and IWTN…IIFK.

This sequence belongs to the GtrA family.

It is found in the cell membrane. Involved in the decoration of cell wall teichoic acid with galactose and glucose. This chain is Cell wall teichoic acid glycosylation protein GtcA (gtcA), found in Listeria monocytogenes.